Consider the following 226-residue polypeptide: Ribonuclease 3 (226 aa).

An RNase III domain is found at 6–128; the sequence is INRLQRKLGY…LIGGVFLDSD (123 aa). Residue Glu-41 participates in Mg(2+) binding. Residue Asp-45 is part of the active site. Mg(2+) is bound by residues Asp-114 and Glu-117. Glu-117 is a catalytic residue. Residues 155 to 225 form the DRBM domain; sequence DPKTRLQEYL…AEQALKQLEL (71 aa).

The protein belongs to the ribonuclease III family. In terms of assembly, homodimer. The cofactor is Mg(2+).

The protein resides in the cytoplasm. The catalysed reaction is Endonucleolytic cleavage to 5'-phosphomonoester.. Its function is as follows. Digests double-stranded RNA. Involved in the processing of primary rRNA transcript to yield the immediate precursors to the large and small rRNAs (23S and 16S). Processes some mRNAs, and tRNAs when they are encoded in the rRNA operon. Processes pre-crRNA and tracrRNA of type II CRISPR loci if present in the organism. In Yersinia pseudotuberculosis serotype O:1b (strain IP 31758), this protein is Ribonuclease 3.